The sequence spans 490 residues: Serine/threonine-protein kinase PBL35 (490 aa).

2 disordered regions span residues 1–39 (MGFD…RNSE) and 80–103 (SAIV…SNAE). The stretch at 14–39 (SKTSNENEKKKKKRRRKKNNNVRNSE) forms a coiled coil. The span at 23–33 (KKKKRRRKKNN) shows a compositional bias: basic residues. Low complexity predominate over residues 94 to 103 (SSTTTTSNAE). In terms of domain architecture, Protein kinase spans 136–422 (FRPESLLGEG…VEVLKPLPHL (287 aa)). ATP contacts are provided by residues 142–150 (LGEGGFGCV) and Lys174. Tyr219 carries the post-translational modification Phosphotyrosine. Residue Asp269 is the Proton acceptor of the active site. Residues Ser273 and Ser303 each carry the phosphoserine modification. 2 positions are modified to phosphothreonine: Thr304 and Thr309. Tyr317 is modified (phosphotyrosine). The segment at 442–490 (AGSGSGSGRGFGSRNGQPVFRTLSSPHGQAGSSPYRHQIPSPKPKGATT) is disordered. The segment covering 444-454 (SGSGSGRGFGS) has biased composition (gly residues). Residues 463–473 (TLSSPHGQAGS) are compositionally biased toward polar residues.

Belongs to the protein kinase superfamily. Ser/Thr protein kinase family. In terms of assembly, interacts with SD129. Post-translationally, phosphorylated by SD129 in response to the pathogen-associated molecular pattern (PAMP) 3-OH-C10:0, a medium-chain 3-hydroxy fatty acid.

It localises to the cell membrane. The catalysed reaction is L-seryl-[protein] + ATP = O-phospho-L-seryl-[protein] + ADP + H(+). It carries out the reaction L-threonyl-[protein] + ATP = O-phospho-L-threonyl-[protein] + ADP + H(+). Functionally, involved in chitin-triggered immune signaling and is required for reactive oxygen species (ROS) production. Acts downstream of SD129 in defense signaling triggered by the pathogen-associated molecular pattern (PAMP) 3-OH-C10:0, a medium-chain 3-hydroxy fatty acid. This chain is Serine/threonine-protein kinase PBL35, found in Arabidopsis thaliana (Mouse-ear cress).